The following is a 206-amino-acid chain: Small ribosomal subunit protein uS4 (206 aa).

In terms of domain architecture, S4 RNA-binding spans 96 to 156 (TRLDNVVYRM…EKSRTQARIK (61 aa)).

This sequence belongs to the universal ribosomal protein uS4 family. As to quaternary structure, part of the 30S ribosomal subunit. Contacts protein S5. The interaction surface between S4 and S5 is involved in control of translational fidelity.

Functionally, one of the primary rRNA binding proteins, it binds directly to 16S rRNA where it nucleates assembly of the body of the 30S subunit. Its function is as follows. With S5 and S12 plays an important role in translational accuracy. The protein is Small ribosomal subunit protein uS4 of Shewanella sp. (strain ANA-3).